A 361-amino-acid polypeptide reads, in one-letter code: Ribosomal RNA small subunit methyltransferase H (361 aa).

S-adenosyl-L-methionine is bound by residues 54–56 (GGH), Asp74, Tyr101, Asp122, and Gln129. The disordered stretch occupies residues 318-361 (ARNSRASSAKLRAAQRLAEGQAPRPRRRNKYAPEGRDEPEGGAA). A compositionally biased stretch (basic and acidic residues) spans 348 to 361 (YAPEGRDEPEGGAA).

Belongs to the methyltransferase superfamily. RsmH family.

It is found in the cytoplasm. The catalysed reaction is cytidine(1402) in 16S rRNA + S-adenosyl-L-methionine = N(4)-methylcytidine(1402) in 16S rRNA + S-adenosyl-L-homocysteine + H(+). Its function is as follows. Specifically methylates the N4 position of cytidine in position 1402 (C1402) of 16S rRNA. The chain is Ribosomal RNA small subunit methyltransferase H from Nitratidesulfovibrio vulgaris (strain DSM 19637 / Miyazaki F) (Desulfovibrio vulgaris).